Reading from the N-terminus, the 128-residue chain is Transcription antitermination protein NusB (128 aa).

Belongs to the NusB family.

In terms of biological role, involved in transcription antitermination. Required for transcription of ribosomal RNA (rRNA) genes. Binds specifically to the boxA antiterminator sequence of the ribosomal RNA (rrn) operons. This is Transcription antitermination protein NusB from Exiguobacterium sp. (strain ATCC BAA-1283 / AT1b).